We begin with the raw amino-acid sequence, 831 residues long: Translation initiation factor IF-2 (831 aa).

Residues 1–11 (MADEIKKENAP) show a composition bias toward basic and acidic residues. A disordered region spans residues 1-236 (MADEIKKENA…GKHAKKASAL (236 aa)). Over residues 22 to 31 (TTVSGTSTTG) the composition is skewed to low complexity. Basic and acidic residues-rich tracts occupy residues 49–150 (DLER…RYAD) and 157–166 (DNGKLDDYSD). Over residues 190-200 (RSKNKVVKAKK) the composition is skewed to basic residues. The span at 201–225 (GGRDDENGNKNERQSDRRNQKDVKG) shows a compositional bias: basic and acidic residues. The tr-type G domain maps to 330–500 (HRAPVVTIMG…LLQSEVLELT (171 aa)). The G1 stretch occupies residues 339 to 346 (GHVDHGKT). 339 to 346 (GHVDHGKT) contacts GTP. Residues 364–368 (GITQH) form a G2 region. The interval 386–389 (DTPG) is G3. GTP-binding positions include 386 to 390 (DTPGH) and 440 to 443 (NKID). A G4 region spans residues 440–443 (NKID). Residues 476–478 (SAK) are G5.

The protein belongs to the TRAFAC class translation factor GTPase superfamily. Classic translation factor GTPase family. IF-2 subfamily.

The protein localises to the cytoplasm. Its function is as follows. One of the essential components for the initiation of protein synthesis. Protects formylmethionyl-tRNA from spontaneous hydrolysis and promotes its binding to the 30S ribosomal subunits. Also involved in the hydrolysis of GTP during the formation of the 70S ribosomal complex. The polypeptide is Translation initiation factor IF-2 (Histophilus somni (strain 2336) (Haemophilus somnus)).